Here is an 87-residue protein sequence, read N- to C-terminus: Small ribosomal subunit protein bS20 (87 aa).

The interval 1–22 is disordered; the sequence is MANTSQARKRARQAGVRRVRNA. Residues 7-20 show a composition bias toward basic residues; that stretch reads ARKRARQAGVRRVR.

Belongs to the bacterial ribosomal protein bS20 family.

Its function is as follows. Binds directly to 16S ribosomal RNA. The chain is Small ribosomal subunit protein bS20 from Nitrosococcus oceani (strain ATCC 19707 / BCRC 17464 / JCM 30415 / NCIMB 11848 / C-107).